Consider the following 220-residue polypeptide: Ribonuclease HII (220 aa).

The RNase H type-2 domain maps to 16-216 (PVFAGIDEAG…VRPNPAAEEQ (201 aa)). The a divalent metal cation site is built by D22, E23, and D114.

It belongs to the RNase HII family. The cofactor is Mn(2+). It depends on Mg(2+) as a cofactor.

The protein resides in the cytoplasm. It catalyses the reaction Endonucleolytic cleavage to 5'-phosphomonoester.. Endonuclease that specifically degrades the RNA of RNA-DNA hybrids. The sequence is that of Ribonuclease HII from Nitratidesulfovibrio vulgaris (strain ATCC 29579 / DSM 644 / CCUG 34227 / NCIMB 8303 / VKM B-1760 / Hildenborough) (Desulfovibrio vulgaris).